The sequence spans 103 residues: Small ribosomal subunit protein uS10 (103 aa).

This sequence belongs to the universal ribosomal protein uS10 family. Part of the 30S ribosomal subunit.

Functionally, involved in the binding of tRNA to the ribosomes. The sequence is that of Small ribosomal subunit protein uS10 from Pelodictyon phaeoclathratiforme (strain DSM 5477 / BU-1).